The primary structure comprises 705 residues: Double-strand break repair protein MRE11 (705 aa).

Mn(2+) is bound by residues aspartate 15, histidine 17, aspartate 55, and asparagine 122. The active-site Proton donor is the histidine 123. Mn(2+)-binding residues include histidine 220, histidine 248, and histidine 250. Residues 505-514 (RSLRSKEDSR) are compositionally biased toward basic and acidic residues. The interval 505–705 (RSLRSKEDSR…TRNYGAVRRR (201 aa)) is disordered. 2 stretches are compositionally biased toward polar residues: residues 515–538 (FTSS…LNSF) and 589–605 (SMKQ…SSAA). Positions 641-663 (GRKRAAPRGGRGRGRGATAKRGR) are enriched in basic residues.

This sequence belongs to the MRE11/RAD32 family. Component of the MRN complex composed of two heterodimers RAD50/MRE11 associated with a single NBS1. Mn(2+) serves as cofactor.

It localises to the nucleus. The protein resides in the chromosome. Core component of the MRN complex, which plays a central role in double-strand break (DSB) repair, DNA recombination, maintenance of telomere integrity and meiosis. The MRN complex is involved in the repair of DNA double-strand breaks (DSBs) via homologous recombination (HR), an error-free mechanism which primarily occurs during S and G2 phases. The complex (1) mediates the end resection of damaged DNA, which generates proper single-stranded DNA, a key initial steps in HR, and is (2) required for the recruitment of other repair factors and efficient activation of ATM and ATR upon DNA damage. Within the MRN complex, MRE11 possesses both single-strand endonuclease activity and double-strand-specific 3'-5' exonuclease activity. MRE11 first endonucleolytically cleaves the 5' strand at DNA DSB ends to prevent non-homologous end joining (NHEJ) and licence HR. It then generates a single-stranded DNA gap via 3' to 5' exonucleolytic degradation, which is required for single-strand invasion and recombination. In Oryza sativa subsp. indica (Rice), this protein is Double-strand break repair protein MRE11.